The chain runs to 41 residues: Large ribosomal subunit protein bL36 (41 aa).

Belongs to the bacterial ribosomal protein bL36 family.

The protein is Large ribosomal subunit protein bL36 of Xanthobacter autotrophicus (strain ATCC BAA-1158 / Py2).